Here is a 251-residue protein sequence, read N- to C-terminus: CDP-diacylglycerol pyrophosphatase (251 aa).

The helical transmembrane segment at 4–24 threads the bilayer; sequence AGLLFLVMIVIAVVAAGIGYW.

The protein belongs to the Cdh family.

It localises to the cell inner membrane. The enzyme catalyses a CDP-1,2-diacyl-sn-glycerol + H2O = a 1,2-diacyl-sn-glycero-3-phosphate + CMP + 2 H(+). It functions in the pathway phospholipid metabolism; CDP-diacylglycerol degradation; phosphatidate from CDP-diacylglycerol: step 1/1. This is CDP-diacylglycerol pyrophosphatase from Escherichia coli (strain ATCC 8739 / DSM 1576 / NBRC 3972 / NCIMB 8545 / WDCM 00012 / Crooks).